The primary structure comprises 360 residues: Photosystem II protein D1 (360 aa).

3 helical membrane-spanning segments follow: residues 29–46 (YIGW…SAIA), 118–133 (HFLI…EWEL), and 142–156 (WICV…AATA). H118 contributes to the chlorophyll a binding site. Y126 serves as a coordination point for pheophytin a. D170 and E189 together coordinate [CaMn4O5] cluster. A helical transmembrane segment spans residues 197–218 (FHMLGVAGVFGGSLFSAMHGSL). H198 is a binding site for chlorophyll a. A quinone-binding positions include H215 and 264–265 (SF). H215 provides a ligand contact to Fe cation. H272 provides a ligand contact to Fe cation. A helical membrane pass occupies residues 274–288 (FLAAWPVIGIWFTAL). [CaMn4O5] cluster is bound by residues H332, E333, D342, and A344. The propeptide occupies 345 to 360 (AGDVAPVALTAPPING).

It belongs to the reaction center PufL/M/PsbA/D family. PSII is composed of 1 copy each of membrane proteins PsbA, PsbB, PsbC, PsbD, PsbE, PsbF, PsbH, PsbI, PsbJ, PsbK, PsbL, PsbM, PsbT, PsbX, PsbY, PsbZ, Psb30/Ycf12, peripheral proteins PsbO, CyanoQ (PsbQ), PsbU, PsbV and a large number of cofactors. It forms dimeric complexes. The cofactor is The D1/D2 heterodimer binds P680, chlorophylls that are the primary electron donor of PSII, and subsequent electron acceptors. It shares a non-heme iron and each subunit binds pheophytin, quinone, additional chlorophylls, carotenoids and lipids. D1 provides most of the ligands for the Mn4-Ca-O5 cluster of the oxygen-evolving complex (OEC). There is also a Cl(-1) ion associated with D1 and D2, which is required for oxygen evolution. The PSII complex binds additional chlorophylls, carotenoids and specific lipids.. In terms of processing, tyr-161 forms a radical intermediate that is referred to as redox-active TyrZ, YZ or Y-Z. C-terminally processed by CtpA; processing is essential to allow assembly of the oxygen-evolving complex and thus photosynthetic growth.

The protein resides in the cellular thylakoid membrane. The catalysed reaction is 2 a plastoquinone + 4 hnu + 2 H2O = 2 a plastoquinol + O2. Its function is as follows. Photosystem II (PSII) is a light-driven water:plastoquinone oxidoreductase that uses light energy to abstract electrons from H(2)O, generating O(2) and a proton gradient subsequently used for ATP formation. It consists of a core antenna complex that captures photons, and an electron transfer chain that converts photonic excitation into a charge separation. The D1/D2 (PsbA/PsbD) reaction center heterodimer binds P680, the primary electron donor of PSII as well as several subsequent electron acceptors. This chain is Photosystem II protein D1, found in Trichormus azollae (Anabaena azollae).